Here is a 134-residue protein sequence, read N- to C-terminus: S-protein homolog 18 (134 aa).

The first 25 residues, 1–25, serve as a signal peptide directing secretion; that stretch reads MCPSSFRLILSVILIAFLFVGLCEA. N-linked (GlcNAc...) asparagine glycosylation occurs at asparagine 87.

It belongs to the plant self-incompatibility (S1) protein family.

The protein localises to the secreted. The sequence is that of S-protein homolog 18 from Arabidopsis thaliana (Mouse-ear cress).